A 182-amino-acid polypeptide reads, in one-letter code: ATP synthase subunit b, chloroplastic (182 aa).

A helical transmembrane segment spans residues 36 to 56 (ILLLLLGLMYVLKEFLGSILV).

This sequence belongs to the ATPase B chain family. In terms of assembly, F-type ATPases have 2 components, F(1) - the catalytic core - and F(0) - the membrane proton channel. F(1) has five subunits: alpha(3), beta(3), gamma(1), delta(1), epsilon(1). F(0) has four main subunits: a(1), b(1), b'(1) and c(10-14). The alpha and beta chains form an alternating ring which encloses part of the gamma chain. F(1) is attached to F(0) by a central stalk formed by the gamma and epsilon chains, while a peripheral stalk is formed by the delta, b and b' chains.

The protein resides in the plastid. Its subcellular location is the chloroplast thylakoid membrane. F(1)F(0) ATP synthase produces ATP from ADP in the presence of a proton or sodium gradient. F-type ATPases consist of two structural domains, F(1) containing the extramembraneous catalytic core and F(0) containing the membrane proton channel, linked together by a central stalk and a peripheral stalk. During catalysis, ATP synthesis in the catalytic domain of F(1) is coupled via a rotary mechanism of the central stalk subunits to proton translocation. Functionally, component of the F(0) channel, it forms part of the peripheral stalk, linking F(1) to F(0). This Gracilaria tenuistipitata var. liui (Red alga) protein is ATP synthase subunit b, chloroplastic.